The primary structure comprises 467 residues: MLIHQRTLQNEISLTGIGLHTGHECTITFKPAPVNTGYIFVRTDINDCPEIPALIDHVVDVLRGTTIGIGDVKVHTTEHVLAALYGLQIDNCRIELSGPEPPVLDGSSNPFAEALLSAGIAEQDEPKNYLVIDETIEFHNPEKSVDIVALPLDGFRMTVMVDYKNPALGSQHSGLFDLDKEFLREFSPCRTFCFLSEVEAMANQGIIKGADIDNAIVIVDKQLDETEVQTLADKVGVDASHLVLGQNGILNNRELRFSNEPARHKLLDLLGDLALLGMPVKAQILAXRPGHASNVEFVKQLKKYADRNKLARQYQHEKKAGVIFDINAIQNILPHRYPFLLIDKIVEFKLDEKIVSIKNVTMNEPFFQGHFPGNPIMPGVLIIEAMAQTGGIMMLNGKENIKESVVFFMGIDKARFRKPVLPGDTLVIEAVMTNMRRTVCQFDAKAYVRGELVCEASLMATVMEKKN.

The interval 1-306 (MLIHQRTLQN…FVKQLKKYAD (306 aa)) is UDP-3-O-acyl-N-acetylglucosamine deacetylase. His79, His264, and Asp268 together coordinate Zn(2+). His291 functions as the Proton donor in the catalytic mechanism. The segment at 307-467 (RNKLARQYQH…LMATVMEKKN (161 aa)) is 3-hydroxyacyl-[acyl-carrier-protein] dehydratase. Residue His370 is part of the active site.

It in the N-terminal section; belongs to the LpxC family. In the C-terminal section; belongs to the thioester dehydratase family. It depends on Zn(2+) as a cofactor.

Its subcellular location is the cytoplasm. The enzyme catalyses a UDP-3-O-[(3R)-3-hydroxyacyl]-N-acetyl-alpha-D-glucosamine + H2O = a UDP-3-O-[(3R)-3-hydroxyacyl]-alpha-D-glucosamine + acetate. The catalysed reaction is a (3R)-hydroxyacyl-[ACP] = a (2E)-enoyl-[ACP] + H2O. It participates in glycolipid biosynthesis; lipid IV(A) biosynthesis; lipid IV(A) from (3R)-3-hydroxytetradecanoyl-[acyl-carrier-protein] and UDP-N-acetyl-alpha-D-glucosamine: step 2/6. Catalyzes the hydrolysis of UDP-3-O-myristoyl-N-acetylglucosamine to form UDP-3-O-myristoylglucosamine and acetate, the committed step in lipid A biosynthesis. Functionally, involved in unsaturated fatty acids biosynthesis. Catalyzes the dehydration of short chain beta-hydroxyacyl-ACPs and long chain saturated and unsaturated beta-hydroxyacyl-ACPs. The protein is Bifunctional enzyme LpxC/FabZ (lpxC/fabZ) of Chlorobaculum tepidum (strain ATCC 49652 / DSM 12025 / NBRC 103806 / TLS) (Chlorobium tepidum).